Here is a 987-residue protein sequence, read N- to C-terminus: Mediator of RNA polymerase II transcription subunit 24 (987 aa).

6 short sequence motifs (LXXLL motif) span residues 128-132 (LHWLL), 344-348 (LTPLL), 446-450 (LDLLL), 555-559 (LVALL), 786-790 (LPGLL), and 855-859 (LMRLL). Phosphoserine occurs at positions 860 and 871.

It belongs to the Mediator complex subunit 24 family. Component of the Mediator complex, which is composed of MED1, MED4, MED6, MED7, MED8, MED9, MED10, MED11, MED12, MED13, MED13L, MED14, MED15, MED16, MED17, MED18, MED19, MED20, MED21, MED22, MED23, MED24, MED25, MED26, MED27, MED29, MED30, MED31, CCNC, CDK8 and CDC2L6/CDK11. The MED12, MED13, CCNC and CDK8 subunits form a distinct module termed the CDK8 module. Mediator containing the CDK8 module is less active than Mediator lacking this module in supporting transcriptional activation. Individual preparations of the Mediator complex lacking one or more distinct subunits have been variously termed ARC, CRSP, DRIP, PC2, SMCC and TRAP. Interacts with AR. Interacts with MED1 and MED10. As to expression, expressed in the adrenal gland, brain, epididymis, heart, kidney, liver, ovary, pancreas, prostate, skeletal muscle, small intestine, spleen, stomach, testis and thymus.

It is found in the nucleus. Component of the Mediator complex, a coactivator involved in the regulated transcription of nearly all RNA polymerase II-dependent genes. Mediator functions as a bridge to convey information from gene-specific regulatory proteins to the basal RNA polymerase II transcription machinery. Mediator is recruited to promoters by direct interactions with regulatory proteins and serves as a scaffold for the assembly of a functional preinitiation complex with RNA polymerase II and the general transcription factors. Required for basal and activator-dependent transcription. This Mus musculus (Mouse) protein is Mediator of RNA polymerase II transcription subunit 24 (Med24).